The primary structure comprises 175 residues: Pycsar effector protein RsPycTM (175 aa).

A run of 3 helical transmembrane segments spans residues Ala17–Leu37, Pro44–Ile64, and Ala146–Ile166.

The protein localises to the cell inner membrane. In terms of biological role, pycsar (pyrimidine cyclase system for antiphage resistance) provides immunity against bacteriophage. The pyrimidine cyclase (PycC) synthesizes cyclic nucleotides in response to infection; these serve as specific second messenger signals. The signals activate the nearby effector, leading to bacterial cell death and abortive phage infection. A clade A Pycsar system. Its function is as follows. The effector gene of a two-gene Pycsar system. Expression of this and uridylate cyclase RsPycC (AC A0A4R2TZQ0) probably confers resistance to bacteriophage. The genes are probably only expressed in response to bacteriophage infection. Probably only responds to cUMP (produced by its cognate NTP cyclase), acts by impairing membrane integrity. The protein is Pycsar effector protein RsPycTM of Rhizobium sp. (strain PP-F2F-G36).